We begin with the raw amino-acid sequence, 486 residues long: N-succinylglutamate 5-semialdehyde dehydrogenase (486 aa).

220–225 (GSSRTG) provides a ligand contact to NAD(+). Residues glutamate 243 and cysteine 277 contribute to the active site.

This sequence belongs to the aldehyde dehydrogenase family. AstD subfamily.

The enzyme catalyses N-succinyl-L-glutamate 5-semialdehyde + NAD(+) + H2O = N-succinyl-L-glutamate + NADH + 2 H(+). The protein operates within amino-acid degradation; L-arginine degradation via AST pathway; L-glutamate and succinate from L-arginine: step 4/5. Catalyzes the NAD-dependent reduction of succinylglutamate semialdehyde into succinylglutamate. This Shewanella frigidimarina (strain NCIMB 400) protein is N-succinylglutamate 5-semialdehyde dehydrogenase.